Consider the following 600-residue polypeptide: FERM domain-containing protein 3 (600 aa).

The FERM domain maps to 31 to 311 (MRCTIRLLDD…ENQAFYKYAK (281 aa)). Residues 413-440 (SAPVLGNSPARGLETTADVTHDEEESIR) form a disordered region. Residues 534–554 (LLLAAIGLLMVVLPLLLILLE) form a helical membrane-spanning segment.

It localises to the membrane. This chain is FERM domain-containing protein 3 (frmd3), found in Xenopus tropicalis (Western clawed frog).